The chain runs to 137 residues: Protein yippee-like F37A8.5 (137 aa).

Residues 1–20 form a disordered region; the sequence is MHFRMKVLENSSKHNTPKKQ. A Yippee domain is found at 32-129; sequence RCYSCIHCRA…IELAHMVKDN (98 aa). Zn(2+) is bound by residues Cys36, Cys39, Cys92, and Cys95.

The protein belongs to the yippee family.

This Caenorhabditis elegans protein is Protein yippee-like F37A8.5.